A 267-amino-acid chain; its full sequence is Ubiquinone biosynthesis protein COQ4, mitochondrial (267 aa).

A mitochondrion-targeting transit peptide spans 1-17; sequence MSRLKIPSQLLRGGRGF. Residues His153, Asp154, His157, and Glu169 each coordinate Zn(2+).

It belongs to the COQ4 family. In terms of assembly, component of a multi-subunit COQ enzyme complex, composed of at least COQ3, COQ4, COQ5, COQ6, COQ7 and COQ9. Zn(2+) serves as cofactor.

The protein localises to the mitochondrion inner membrane. The catalysed reaction is a 4-hydroxy-3-methoxy-5-(all-trans-polyprenyl)benzoate + H(+) = a 2-methoxy-6-(all-trans-polyprenyl)phenol + CO2. Its pathway is cofactor biosynthesis; ubiquinone biosynthesis. In terms of biological role, lyase that catalyzes the C1-decarboxylation of 4-hydroxy-3-methoxy-5-(all-trans-polyprenyl)benzoic acid into 2-methoxy-6-(all-trans-polyprenyl)phenol during ubiquinone biosynthesis. This Arthroderma otae (strain ATCC MYA-4605 / CBS 113480) (Microsporum canis) protein is Ubiquinone biosynthesis protein COQ4, mitochondrial.